The following is a 480-amino-acid chain: Cobyric acid synthase (480 aa).

Positions 246–434 (KILIAVPILP…VHGLFSELAQ (189 aa)) constitute a GATase cobBQ-type domain. C328 acts as the Nucleophile in catalysis. The active site involves H426.

This sequence belongs to the CobB/CobQ family. CobQ subfamily.

It participates in cofactor biosynthesis; adenosylcobalamin biosynthesis. Its function is as follows. Catalyzes amidations at positions B, D, E, and G on adenosylcobyrinic A,C-diamide. NH(2) groups are provided by glutamine, and one molecule of ATP is hydrogenolyzed for each amidation. The protein is Cobyric acid synthase of Methylocella silvestris (strain DSM 15510 / CIP 108128 / LMG 27833 / NCIMB 13906 / BL2).